The chain runs to 328 residues: Lytic polysaccharide monooxygenase aasB (328 aa).

The first 18 residues, 1 to 18 (MKAFFAISASTLLATVHG), serve as a signal peptide directing secretion. H19 is a Cu(2+) binding site. C40 and C43 are joined by a disulfide. An N-linked (GlcNAc...) asparagine glycan is attached at N54. 6 disulfides stabilise this stretch: C66–C245, C102–C203, C118–C145, C153–C161, C167–C173, and C181–C192. Residue H109 coordinates Cu(2+). Y242 is a binding site for Cu(2+). The N-linked (GlcNAc...) asparagine glycan is linked to N306.

This sequence belongs to the polysaccharide monooxygenase AA13 family. Requires Cu(2+) as cofactor.

The protein resides in the secreted. It catalyses the reaction starch + reduced acceptor + O2 = D-glucono-1,5-lactone-terminated malto-oligosaccharides + short-chain malto-oligosaccharides + acceptor + H2O.. Its function is as follows. Lytic polysaccharide monooxygenase involved in breakdown of granular resistant starch. This chain is Lytic polysaccharide monooxygenase aasB, found in Emericella nidulans (strain FGSC A4 / ATCC 38163 / CBS 112.46 / NRRL 194 / M139) (Aspergillus nidulans).